An 84-amino-acid polypeptide reads, in one-letter code: Large ribosomal subunit protein bL27 (84 aa).

This sequence belongs to the bacterial ribosomal protein bL27 family.

The sequence is that of Large ribosomal subunit protein bL27 from Campylobacter jejuni subsp. jejuni serotype O:6 (strain 81116 / NCTC 11828).